Here is a 106-residue protein sequence, read N- to C-terminus: ATP-dependent Clp protease adapter protein ClpS (106 aa).

The protein belongs to the ClpS family. Binds to the N-terminal domain of the chaperone ClpA.

In terms of biological role, involved in the modulation of the specificity of the ClpAP-mediated ATP-dependent protein degradation. In Citrobacter koseri (strain ATCC BAA-895 / CDC 4225-83 / SGSC4696), this protein is ATP-dependent Clp protease adapter protein ClpS.